The chain runs to 208 residues: Molybdenum cofactor guanylyltransferase (208 aa).

Residues 10–12 (LAG), Lys-23, Asp-69, and Asp-103 each bind GTP. Asp-103 is a binding site for Mg(2+).

Belongs to the MobA family. In terms of assembly, monomer. It depends on Mg(2+) as a cofactor.

It is found in the cytoplasm. The enzyme catalyses Mo-molybdopterin + GTP + H(+) = Mo-molybdopterin guanine dinucleotide + diphosphate. Transfers a GMP moiety from GTP to Mo-molybdopterin (Mo-MPT) cofactor (Moco or molybdenum cofactor) to form Mo-molybdopterin guanine dinucleotide (Mo-MGD) cofactor. The sequence is that of Molybdenum cofactor guanylyltransferase from Mesorhizobium japonicum (strain LMG 29417 / CECT 9101 / MAFF 303099) (Mesorhizobium loti (strain MAFF 303099)).